Reading from the N-terminus, the 593-residue chain is RGRDDDDEENPRDPREQYRQCQEYCRRQGQGQRQQQQCQIRCEERLEEDQRSQEERERRRGRDVDDQNPRDPEQRYEQCQQQCERQRRGQEQTLCRRRCEQRRQQEERERQRGRDRQDPQQQYHRCQRRCQIQEQSPERQRQCQQRCERQYKEQQGRERGPEASPRRESRGREEEQQRHNPYYFHSQSIRSRHESEEGEVKYLERFTERTELLRGIENYRVVILDANPNTSMLPHHKDAESVAVVTRGRATLTLVSQETRESFNLECGDVIRVPAGATVYVINQDSNERLEMVKLLQPVNNPGQFREYYAAGAKSPDQSYLRVFSNDILVAALNTPRDRLERFFDQQEQREGVIIRASQEKLRALSQHAMSAGQRPWGRRSSGGPISLKSESPSYSNQFGQFFEACPEEHRQLQEMDVLVNYAEIKRGAMMVPHYNSKATVVVYVVEGTGRYEMACPHVSSQSYEGQGRREQEEEESTGRFQKVTARLARGDIFVIPAGHPIAITASQNENLRLLGFDINGENNQRDFLAGQNNIINQLEREAKELSFNMPREEIEEIFESQMESYFVPTERQSRRGQGRDHPLASILDFAFF.

2 stretches are compositionally biased toward basic and acidic residues: residues 46–76 and 97–118; these read LEED…EQRY and RRCE…DRQD. A disordered region spans residues 46-123; sequence LEEDQRSQEE…RDRQDPQQQY (78 aa). IgE-binding regions lie at residues 49 to 58, 76 to 85, and 101 to 110; these read DQRSQEERER, YEQCQQQCER, and QRRQQEERER. The interval 140–149 is igE-binding. Involved in cross-reactivity with peanut allergen Ara h 2; able to inhibit binding of IgE from a peanut-allergic patient to Ara h 2; sequence QRQCQQRCER. A compositionally biased stretch (basic and acidic residues) spans 150-178; sequence QYKEQQGRERGPEASPRRESRGREEEQQR. The segment at 150-184 is disordered; it reads QYKEQQGRERGPEASPRRESRGREEEQQRHNPYYF. T-cell epitope; recognized by the HLA-DRB1-restricted CD4(+) T-cells stretches follow at residues 175–193 and 206–225; these read EQQR…RSRH and FTER…VILD. Tyr182 contributes to the Cu cation binding site. Cupin type-1 domains are found at residues 187–341 and 386–556; these read QSIR…DRLE and ISLK…EEIE. The N-linked (GlcNAc...) asparagine glycan is linked to Asn229. T-cell epitope; recognized by the HLA-DRB1-restricted CD4(+) T-cells stretches follow at residues 246–265, 302–321, 318–337, 382–401, 414–433, and 438–457; these read TRGR…SFNL, PGQF…QSYL, QSYL…NTPR, SGGP…QFGQ, QEMD…MMVP, and KATV…MACP. Cu cation contacts are provided by Cys456 and His458. The interval 463–470 is igE-binding; that stretch reads SYEGQGRR. Positions 478-497 are T-cell epitope; recognized by the HLA-DRB1-restricted CD4(+) T-cells; it reads TGRFQKVTARLARGDIFVIP. A Cu cation-binding site is contributed by His500. The stretch at 529–556 forms a coiled coil; that stretch reads LAGQNNIINQLEREAKELSFNMPREEIE. The interval 541-555 is igE-binding; it reads REAKELSFNMPREEI. T-cell epitope; recognized by the HLA-DRB1-restricted CD4(+) T-cells stretches follow at residues 542 to 561 and 558 to 577; these read EAKE…IFES and IFES…SRRG.

It belongs to the 7S seed storage protein family. Post-translationally, proteolytically cleaved. As to expression, expressed in seed (at protein level).

In terms of biological role, seed storage protein. This chain is Vicilin Jug r 2.0101, found in Juglans regia (English walnut).